The sequence spans 318 residues: Homoserine kinase (318 aa).

Residue proline 97–cysteine 107 participates in ATP binding.

It belongs to the GHMP kinase family. Homoserine kinase subfamily.

The protein resides in the cytoplasm. The catalysed reaction is L-homoserine + ATP = O-phospho-L-homoserine + ADP + H(+). The protein operates within amino-acid biosynthesis; L-threonine biosynthesis; L-threonine from L-aspartate: step 4/5. Its function is as follows. Catalyzes the ATP-dependent phosphorylation of L-homoserine to L-homoserine phosphate. The polypeptide is Homoserine kinase (Vibrio vulnificus (strain CMCP6)).